The following is a 179-amino-acid chain: Inner membrane-spanning protein YciB (179 aa).

The next 6 membrane-spanning stretches (helical) occupy residues 3–23 (FLFD…ADIY), 24–44 (TATA…WFRH), 49–69 (PMQW…LVLH), 76–96 (WKPT…VIGW), 121–141 (AAWA…AYQF), and 149–169 (FKLF…SVWL).

This sequence belongs to the YciB family.

Its subcellular location is the cell inner membrane. Its function is as follows. Plays a role in cell envelope biogenesis, maintenance of cell envelope integrity and membrane homeostasis. This is Inner membrane-spanning protein YciB from Cupriavidus necator (strain ATCC 17699 / DSM 428 / KCTC 22496 / NCIMB 10442 / H16 / Stanier 337) (Ralstonia eutropha).